The sequence spans 876 residues: Valine--tRNA ligase (876 aa).

The 'HIGH' region motif lies at 43–53 (PNVTGVLHMGH). Positions 533-537 (KMSKS) match the 'KMSKS' region motif. Residue lysine 536 coordinates ATP. The stretch at 804 to 876 (GALIDVEEEI…DSLNQLQSTK (73 aa)) forms a coiled coil.

It belongs to the class-I aminoacyl-tRNA synthetase family. ValS type 1 subfamily. Monomer.

It localises to the cytoplasm. The enzyme catalyses tRNA(Val) + L-valine + ATP = L-valyl-tRNA(Val) + AMP + diphosphate. In terms of biological role, catalyzes the attachment of valine to tRNA(Val). As ValRS can inadvertently accommodate and process structurally similar amino acids such as threonine, to avoid such errors, it has a 'posttransfer' editing activity that hydrolyzes mischarged Thr-tRNA(Val) in a tRNA-dependent manner. The chain is Valine--tRNA ligase from Porphyromonas gingivalis (strain ATCC 33277 / DSM 20709 / CIP 103683 / JCM 12257 / NCTC 11834 / 2561).